Here is a 316-residue protein sequence, read N- to C-terminus: tRNA dimethylallyltransferase (316 aa).

23–30 contacts ATP; sequence GPTASGKS. 25-30 lines the substrate pocket; that stretch reads TASGKS. The interval 48 to 51 is interaction with substrate tRNA; the sequence is DSMQ.

The protein belongs to the IPP transferase family. In terms of assembly, monomer. The cofactor is Mg(2+).

It catalyses the reaction adenosine(37) in tRNA + dimethylallyl diphosphate = N(6)-dimethylallyladenosine(37) in tRNA + diphosphate. Catalyzes the transfer of a dimethylallyl group onto the adenine at position 37 in tRNAs that read codons beginning with uridine, leading to the formation of N6-(dimethylallyl)adenosine (i(6)A). The sequence is that of tRNA dimethylallyltransferase from Rhodopseudomonas palustris (strain BisB18).